The primary structure comprises 1357 residues: DNA-directed RNA polymerase subunit beta (1357 aa).

It belongs to the RNA polymerase beta chain family. The RNAP catalytic core consists of 2 alpha, 1 beta, 1 beta' and 1 omega subunit. When a sigma factor is associated with the core the holoenzyme is formed, which can initiate transcription.

It catalyses the reaction RNA(n) + a ribonucleoside 5'-triphosphate = RNA(n+1) + diphosphate. Functionally, DNA-dependent RNA polymerase catalyzes the transcription of DNA into RNA using the four ribonucleoside triphosphates as substrates. In Pseudomonas paraeruginosa (strain DSM 24068 / PA7) (Pseudomonas aeruginosa (strain PA7)), this protein is DNA-directed RNA polymerase subunit beta.